Here is an 88-residue protein sequence, read N- to C-terminus: Small ribosomal subunit protein uS19 (88 aa).

It belongs to the universal ribosomal protein uS19 family.

Protein S19 forms a complex with S13 that binds strongly to the 16S ribosomal RNA. The sequence is that of Small ribosomal subunit protein uS19 from Chlamydia abortus (strain DSM 27085 / S26/3) (Chlamydophila abortus).